Here is a 61-residue protein sequence, read N- to C-terminus: Photosystem II reaction center X protein (61 aa).

The helical transmembrane segment at 26 to 46 (IGSFIAAALLIVIPATAFLIF) threads the bilayer.

Belongs to the PsbX family. Type 2 subfamily. PSII consists of a core antenna complex that captures photons, and an electron transfer chain that converts photonic excitation into a charge separation. PSII forms dimeric complexes.

The protein resides in the cellular thylakoid membrane. Involved in the binding and/or turnover of quinones at the Q(B) site of Photosystem II. The polypeptide is Photosystem II reaction center X protein (Prochlorococcus marinus (strain MIT 9312)).